We begin with the raw amino-acid sequence, 349 residues long: Protein-glutamate methylesterase/protein-glutamine glutaminase (349 aa).

Residues 5 to 122 (RVLSVDDSAL…REGMLAYSEM (118 aa)) enclose the Response regulatory domain. D56 is subject to 4-aspartylphosphate. The CheB-type methylesterase domain maps to 152–344 (LLSSEKLIAI…QQMLAKISAG (193 aa)). Active-site residues include S164, H190, and D286.

It belongs to the CheB family. Post-translationally, phosphorylated by CheA. Phosphorylation of the N-terminal regulatory domain activates the methylesterase activity.

Its subcellular location is the cytoplasm. It carries out the reaction [protein]-L-glutamate 5-O-methyl ester + H2O = L-glutamyl-[protein] + methanol + H(+). The catalysed reaction is L-glutaminyl-[protein] + H2O = L-glutamyl-[protein] + NH4(+). Its function is as follows. Involved in chemotaxis. Part of a chemotaxis signal transduction system that modulates chemotaxis in response to various stimuli. Catalyzes the demethylation of specific methylglutamate residues introduced into the chemoreceptors (methyl-accepting chemotaxis proteins or MCP) by CheR. Also mediates the irreversible deamidation of specific glutamine residues to glutamic acid. This chain is Protein-glutamate methylesterase/protein-glutamine glutaminase, found in Escherichia coli O6:H1 (strain CFT073 / ATCC 700928 / UPEC).